A 230-amino-acid chain; its full sequence is MFIKNLSKNIIDFPKPEKALKDPNGLLASGGDLSPERLLVAYQNGIFPWFNEGEPILWWSPDPRAVLLKCHVSRSMKRFIRPGRCPYHFSLNCAFSDVITTCATKRSGCTWISSDIVKAYCQLHRLGRAHSVEVWLKDKLVGGLYGISVGAMFCGESMFSIADNASKSALIIFEHYFTQKGGKWIDCQVLNAHTACLGAEQIPRNDFLSLLDQAQRVSLPKGVWSPQSLG.

Belongs to the L/F-transferase family.

It is found in the cytoplasm. It catalyses the reaction N-terminal L-lysyl-[protein] + L-leucyl-tRNA(Leu) = N-terminal L-leucyl-L-lysyl-[protein] + tRNA(Leu) + H(+). It carries out the reaction N-terminal L-arginyl-[protein] + L-leucyl-tRNA(Leu) = N-terminal L-leucyl-L-arginyl-[protein] + tRNA(Leu) + H(+). The enzyme catalyses L-phenylalanyl-tRNA(Phe) + an N-terminal L-alpha-aminoacyl-[protein] = an N-terminal L-phenylalanyl-L-alpha-aminoacyl-[protein] + tRNA(Phe). Functionally, functions in the N-end rule pathway of protein degradation where it conjugates Leu, Phe and, less efficiently, Met from aminoacyl-tRNAs to the N-termini of proteins containing an N-terminal arginine or lysine. This is Leucyl/phenylalanyl-tRNA--protein transferase from Hamiltonella defensa subsp. Acyrthosiphon pisum (strain 5AT).